The sequence spans 242 residues: Uridylate kinase (242 aa).

Residue 15–18 coordinates ATP; that stretch reads KLSG. Residues 23-28 are involved in allosteric activation by GTP; sequence GDEGFG. Gly-57 lines the UMP pocket. Residues Gly-58 and Arg-62 each coordinate ATP. Residues Asp-77 and 138 to 145 each bind UMP; that span reads TGNPFCTT. The ATP site is built by Thr-165, Tyr-171, and Asp-174.

This sequence belongs to the UMP kinase family. As to quaternary structure, homohexamer.

It localises to the cytoplasm. The catalysed reaction is UMP + ATP = UDP + ADP. The protein operates within pyrimidine metabolism; CTP biosynthesis via de novo pathway; UDP from UMP (UMPK route): step 1/1. Its activity is regulated as follows. Allosterically activated by GTP. Inhibited by UTP. Functionally, catalyzes the reversible phosphorylation of UMP to UDP. The polypeptide is Uridylate kinase (Shewanella sp. (strain MR-4)).